The primary structure comprises 316 residues: UDP-N-acetylenolpyruvoylglucosamine reductase (316 aa).

The 165-residue stretch at 30 to 194 folds into the FAD-binding PCMH-type domain; that stretch reads VGGEADYLVF…LSVKFALAPG (165 aa). Arginine 173 is a catalytic residue. Residue serine 223 is the Proton donor of the active site. Residue glutamate 293 is part of the active site.

This sequence belongs to the MurB family. FAD is required as a cofactor.

The protein resides in the cytoplasm. The catalysed reaction is UDP-N-acetyl-alpha-D-muramate + NADP(+) = UDP-N-acetyl-3-O-(1-carboxyvinyl)-alpha-D-glucosamine + NADPH + H(+). The protein operates within cell wall biogenesis; peptidoglycan biosynthesis. Cell wall formation. The chain is UDP-N-acetylenolpyruvoylglucosamine reductase from Streptococcus pneumoniae serotype 19F (strain G54).